Here is a 311-residue protein sequence, read N- to C-terminus: Probable cell division protein WhiA (311 aa).

Residues 277–311 (TLKEVADQIPDGPISKSGVNHRFKKLHEIAESLRE) constitute a DNA-binding region (H-T-H motif).

This sequence belongs to the WhiA family.

Its function is as follows. Involved in cell division and chromosome segregation. The protein is Probable cell division protein WhiA of Lactobacillus acidophilus (strain ATCC 700396 / NCK56 / N2 / NCFM).